The sequence spans 544 residues: Chaperonin GroEL 2 (544 aa).

Residues 29–32, 86–90, G413, 479–481, and D495 each bind ATP; these read TLGP, DGTTT, and NAA.

Belongs to the chaperonin (HSP60) family. Forms a cylinder of 14 subunits composed of two heptameric rings stacked back-to-back. Interacts with the co-chaperonin GroES.

Its subcellular location is the cytoplasm. The catalysed reaction is ATP + H2O + a folded polypeptide = ADP + phosphate + an unfolded polypeptide.. In terms of biological role, together with its co-chaperonin GroES, plays an essential role in assisting protein folding. The GroEL-GroES system forms a nano-cage that allows encapsulation of the non-native substrate proteins and provides a physical environment optimized to promote and accelerate protein folding. In Prochlorococcus marinus (strain MIT 9313), this protein is Chaperonin GroEL 2.